A 314-amino-acid polypeptide reads, in one-letter code: Large ribosomal subunit protein uL10 (314 aa).

The interval 285–314 is disordered; sequence GAAAGGAAAEEEKEEEEESDEEGGFGDLFG. Over residues 293-308 the composition is skewed to acidic residues; that stretch reads AEEEKEEEEESDEEGG. Ser-303 bears the Phosphoserine; by CK1 mark.

The protein belongs to the universal ribosomal protein uL10 family. As to quaternary structure, component of the large ribosomal subunit. P0 forms a pentameric complex by interaction with dimers of P1 and P2. Phosphorylated.

Its function is as follows. Ribosomal protein P0 is the functional equivalent of E.coli protein L10. The protein is Large ribosomal subunit protein uL10 of Podospora anserina (Pleurage anserina).